Consider the following 443-residue polypeptide: Thymidine phosphorylase (443 aa).

This sequence belongs to the thymidine/pyrimidine-nucleoside phosphorylase family. As to quaternary structure, homodimer.

The enzyme catalyses thymidine + phosphate = 2-deoxy-alpha-D-ribose 1-phosphate + thymine. The protein operates within pyrimidine metabolism; dTMP biosynthesis via salvage pathway; dTMP from thymine: step 1/2. In terms of biological role, the enzymes which catalyze the reversible phosphorolysis of pyrimidine nucleosides are involved in the degradation of these compounds and in their utilization as carbon and energy sources, or in the rescue of pyrimidine bases for nucleotide synthesis. This Shewanella woodyi (strain ATCC 51908 / MS32) protein is Thymidine phosphorylase.